A 102-amino-acid polypeptide reads, in one-letter code: RNA-binding protein Hfq (102 aa).

A Sm domain is found at 9–68 (DPFLNALRRERVPVSIYLVNGIKLQGQIESFDQFVILLKNTVSQMVYKHAISTVVPSRPV). The segment at 63 to 102 (VPSRPVSHHSNNAGGGSNNYHHSNNAQPSSAASQDSEDAE) is disordered. Residues 70–96 (HHSNNAGGGSNNYHHSNNAQPSSAASQ) show a composition bias toward low complexity.

It belongs to the Hfq family. Homohexamer.

Its function is as follows. RNA chaperone that binds small regulatory RNA (sRNAs) and mRNAs to facilitate mRNA translational regulation in response to envelope stress, environmental stress and changes in metabolite concentrations. Also binds with high specificity to tRNAs. This is RNA-binding protein Hfq from Cronobacter sakazakii (strain ATCC BAA-894) (Enterobacter sakazakii).